A 178-amino-acid polypeptide reads, in one-letter code: Phosphopantetheine adenylyltransferase (178 aa).

T17 is a substrate binding site. ATP-binding positions include 17–18 (TF) and H25. Substrate is bound by residues K49, L86, and R100. ATP is bound by residues 101–103 (GLR), E111, and 136–142 (LQPVASR).

The protein belongs to the bacterial CoaD family. In terms of assembly, homohexamer. The cofactor is Mg(2+).

The protein localises to the cytoplasm. The enzyme catalyses (R)-4'-phosphopantetheine + ATP + H(+) = 3'-dephospho-CoA + diphosphate. The protein operates within cofactor biosynthesis; coenzyme A biosynthesis; CoA from (R)-pantothenate: step 4/5. Reversibly transfers an adenylyl group from ATP to 4'-phosphopantetheine, yielding dephospho-CoA (dPCoA) and pyrophosphate. This is Phosphopantetheine adenylyltransferase from Zymomonas mobilis subsp. mobilis (strain ATCC 31821 / ZM4 / CP4).